A 233-amino-acid polypeptide reads, in one-letter code: Large ribosomal subunit protein uL1 (233 aa).

The protein belongs to the universal ribosomal protein uL1 family. As to quaternary structure, part of the 50S ribosomal subunit.

Functionally, binds directly to 23S rRNA. The L1 stalk is quite mobile in the ribosome, and is involved in E site tRNA release. In terms of biological role, protein L1 is also a translational repressor protein, it controls the translation of the L11 operon by binding to its mRNA. The protein is Large ribosomal subunit protein uL1 of Proteus mirabilis (strain HI4320).